The chain runs to 295 residues: Probable alpha-L-glutamate ligase 1 (295 aa).

The ATP-grasp domain occupies 104-287 (MQLLSRKGIG…VANAIIEFIE (184 aa)). Residues K141, 178 to 179 (EY), D187, and 211 to 213 (RSN) contribute to the ATP site. Residues D248, E260, and N262 each coordinate Mg(2+). Mn(2+) is bound by residues D248, E260, and N262.

Belongs to the RimK family. Mg(2+) serves as cofactor. It depends on Mn(2+) as a cofactor.

This chain is Probable alpha-L-glutamate ligase 1, found in Shewanella denitrificans (strain OS217 / ATCC BAA-1090 / DSM 15013).